A 631-amino-acid chain; its full sequence is Fusexin 1 (631 aa).

An N-terminal signal peptide occupies residues 1–19; the sequence is MRRAALILAFVLFIGLSSA. Residues 20–90 form a domain I N-terminus region; it reads TVTSADSITY…THQDSKLKYS (71 aa). Topologically, residues 20–537 are extracellular; the sequence is TVTSADSITY…NLFGGSGSGD (518 aa). The segment at 91–170 is domain II N-terminus; the sequence is TSTSDELRDI…KLATPAYIDN (80 aa). 4 residues coordinate Ca(2+): aspartate 112, serine 146, tyrosine 149, and aspartate 150. An intrachain disulfide couples cysteine 125 to cysteine 155. The segment at 143–148 is fusion loop, required for fusogenic activity, not required for membrane surface localization; sequence SVTSPV. The domain I central section stretch occupies residues 171-224; the sequence is PDEIFTAKAELQAGDKTIQSATLSNGDAGDGTVTDLGDSKISWNGNLDLGASEP. The tract at residues 225 to 316 is domain II C-terminus; that stretch reads ENSRVIALYS…KDSSLDTGSF (92 aa). The tract at residues 317-348 is domain I C-terminus; the sequence is VYDTPELLSYPSFTVYVDAGENGYIEVTKPTG. Residues 349 to 455 are domain III; it reads DPDIISTSST…SVSVTGIQQS (107 aa). Intrachain disulfides connect cysteine 389/cysteine 432, cysteine 457/cysteine 477, and cysteine 490/cysteine 506. Residues 443-467 form a disordered region; that stretch reads DSTSVSVTGIQQSECNPGDQRREKN. The tract at residues 456–509 is domain IV, required for fusogenic activity; the sequence is ECNPGDQRREKNENDRWEIYTCQDNGLTYEYDVTCAEDEKAVAQGDNQFSCEKQ. The tract at residues 510–537 is stem; it reads DDDSGGGDNTGSDSGLFSNLFGGSGSGD. The helical transmembrane segment at 538 to 558 threads the bilayer; that stretch reads LLTQVHTALSILAGLVAGFFG. Residues 559–590 lie on the Cytoplasmic side of the membrane; that stretch reads YRGARWIHGETDIKGGFKLESRNVSRVKRGSP. A helical transmembrane segment spans residues 591–611; the sequence is VAGIVGAVLGFVVGYGVASVF. A topological domain (extracellular) is located at residue histidine 612. The helical transmembrane segment at 613–630 threads the bilayer; it reads PVVQIIVVLGIAVGLYYF. A topological domain (cytoplasmic) is located at residue arginine 631.

Belongs to the HAP2/GCS1 family. Fusexin 1 subfamily. Monomer in solution, crystallizes as a trimer in high salt (2.5 M NaCl, 0.2 M CaCl(2)). The trimer is stabilized by interdomain contacts and numerous Ca(2+) and Na(+) ions.

It is found in the cell surface. The protein localises to the cell membrane. In terms of biological role, exhibits fusogenic activity. Mediates cell-cell fusion in mammalian cells when present in both cells (bilateral fusion). This chain is Fusexin 1, found in Uncultured archaeon.